Consider the following 187-residue polypeptide: Keratin-associated protein 5-8 (187 aa).

Repeat copies occupy residues 28–31 (CCVP), 34–37 (CCKP), 40–43 (CCVP), 109–112 (CCKP), 119–122 (CCKP), 138–141 (CCKP), 148–151 (CCKP), 167–170 (CCKP), and 177–180 (CCVP). Residues 28 to 180 (CCVPICCCKP…CCSQSSCCVP (153 aa)) are 9 X 4 AA repeats of C-C-X-P.

The protein belongs to the KRTAP type 5 family. In terms of tissue distribution, restricted to hair root, not detected in any other tissues. Expressed in cuticle layers of differentiating hair follicles.

In the hair cortex, hair keratin intermediate filaments are embedded in an interfilamentous matrix, consisting of hair keratin-associated protein (KRTAP), which are essential for the formation of a rigid and resistant hair shaft through their extensive disulfide bond cross-linking with abundant cysteine residues of hair keratins. The matrix proteins include the high-sulfur and high-glycine-tyrosine keratins. The polypeptide is Keratin-associated protein 5-8 (KRTAP5-8) (Homo sapiens (Human)).